A 63-amino-acid polypeptide reads, in one-letter code: UPF0337 protein SERP0494 (63 aa).

The disordered stretch occupies residues 1–46 (MAEDKFEQAKGNIKETVGNATDNKELEKDGKGDKASGKAKEAVENV). Positions 22 to 46 (DNKELEKDGKGDKASGKAKEAVENV) are enriched in basic and acidic residues.

It belongs to the UPF0337 (CsbD) family.

This Staphylococcus epidermidis (strain ATCC 35984 / DSM 28319 / BCRC 17069 / CCUG 31568 / BM 3577 / RP62A) protein is UPF0337 protein SERP0494.